The following is a 282-amino-acid chain: D-alanine aminotransferase (282 aa).

Substrate is bound at residue Tyr32. Residue Arg51 coordinates pyridoxal 5'-phosphate. Substrate is bound by residues Arg99 and His101. Residue Lys146 is the Proton acceptor of the active site. Lys146 carries the post-translational modification N6-(pyridoxal phosphate)lysine. Glu178 lines the pyridoxal 5'-phosphate pocket.

This sequence belongs to the class-IV pyridoxal-phosphate-dependent aminotransferase family. Homodimer. It depends on pyridoxal 5'-phosphate as a cofactor.

The catalysed reaction is D-alanine + 2-oxoglutarate = D-glutamate + pyruvate. Functionally, acts on the D-isomers of alanine, leucine, aspartate, glutamate, aminobutyrate, norvaline and asparagine. The enzyme transfers an amino group from a substrate D-amino acid to the pyridoxal phosphate cofactor to form pyridoxamine and an alpha-keto acid in the first half-reaction. The second half-reaction is the reverse of the first, transferring the amino group from the pyridoxamine to a second alpha-keto acid to form the product D-amino acid via a ping-pong mechanism. This is an important process in the formation of D-alanine and D-glutamate, which are essential bacterial cell wall components. The protein is D-alanine aminotransferase (dat) of Staphylococcus haemolyticus.